Consider the following 879-residue polypeptide: Alanine--tRNA ligase (879 aa).

Positions 566, 570, 668, and 672 each coordinate Zn(2+).

It belongs to the class-II aminoacyl-tRNA synthetase family. Requires Zn(2+) as cofactor.

It localises to the cytoplasm. The catalysed reaction is tRNA(Ala) + L-alanine + ATP = L-alanyl-tRNA(Ala) + AMP + diphosphate. Catalyzes the attachment of alanine to tRNA(Ala) in a two-step reaction: alanine is first activated by ATP to form Ala-AMP and then transferred to the acceptor end of tRNA(Ala). Also edits incorrectly charged Ser-tRNA(Ala) and Gly-tRNA(Ala) via its editing domain. The polypeptide is Alanine--tRNA ligase (Clostridium beijerinckii (strain ATCC 51743 / NCIMB 8052) (Clostridium acetobutylicum)).